Consider the following 484-residue polypeptide: Probable cobyric acid synthase (484 aa).

The GATase cobBQ-type domain maps to 247–433 (ELHIQIVKLP…LHGIFHNFAF (187 aa)). Cys325 functions as the Nucleophile in the catalytic mechanism. The active site involves His425.

It belongs to the CobB/CobQ family. CobQ subfamily.

It functions in the pathway cofactor biosynthesis; adenosylcobalamin biosynthesis. Catalyzes amidations at positions B, D, E, and G on adenosylcobyrinic A,C-diamide. NH(2) groups are provided by glutamine, and one molecule of ATP is hydrogenolyzed for each amidation. This is Probable cobyric acid synthase from Thermococcus onnurineus (strain NA1).